A 629-amino-acid chain; its full sequence is Mitochondrial Rho GTPase 1 (629 aa).

The Cytoplasmic portion of the chain corresponds to 1–600; that stretch reads MSTAVRICVC…PRSEEPPADR (600 aa). The 169-residue stretch at 2-170 folds into the Miro 1 domain; it reads STAVRICVCG…FYLCQKAVTH (169 aa). Residues 11–18, 59–63, and 115–118 each bind GTP; these read GDEGTGKS, DTSAR, and NKSD. 2 consecutive EF-hand domains span residues 186–221 and 306–341; these read ACVD…SFDK and AGYR…TPGL. The Ca(2+) site is built by aspartate 199, aspartate 201, aspartate 203, tyrosine 205, glutamate 210, aspartate 319, aspartate 321, aspartate 323, and glutamate 330. The Miro 2 domain occupies 421–585; it reads RNVVLCYILG…FVALAEAATN (165 aa). Residues 430-437, 466-470, and 535-538 contribute to the GTP site; these read GSSGAGKS, ELQGG, and LKAD. A helical; Anchor for type IV membrane protein membrane pass occupies residues 601 to 621; sequence ASLYMALGATACAALAAFMIW. At 622-629 the chain is on the mitochondrial intermembrane side; it reads RRSTSNAA.

The protein belongs to the mitochondrial Rho GTPase family.

It is found in the mitochondrion outer membrane. Its function is as follows. Mitochondrial GTPase involved in mitochondrial trafficking. Probably involved in control of anterograde transport of mitochondria and their subcellular distribution. The polypeptide is Mitochondrial Rho GTPase 1 (gem-1) (Neurospora crassa (strain ATCC 24698 / 74-OR23-1A / CBS 708.71 / DSM 1257 / FGSC 987)).